Reading from the N-terminus, the 209-residue chain is Thymidylate kinase (209 aa).

Residue 13-20 (GLEGAGKS) participates in ATP binding.

Belongs to the thymidylate kinase family.

The enzyme catalyses dTMP + ATP = dTDP + ADP. In terms of biological role, phosphorylation of dTMP to form dTDP in both de novo and salvage pathways of dTTP synthesis. The protein is Thymidylate kinase of Shewanella sp. (strain ANA-3).